The primary structure comprises 175 residues: Bcl-2-related protein A1 (175 aa).

The BH1 signature appears at 77 to 97 (KEFEDGIINWGRIVTIFAFEG). The BH2 motif lies at 132-147 (EWIRQNGGWENGFVKK).

Belongs to the Bcl-2 family. Interacts directly with BAK1, BID, BMF and BBC3. Interacts directly with BCL2L11/BIM. Interacts with BAX isoform Sigma. Interacts directly with PMAIP1. Interacts with RTL10/BOP. Interacts with ING4. Interacts with UBQLN4. Seems to be restricted to the hematopoietic compartment. Expressed in peripheral blood, spleen, and bone marrow, at moderate levels in lung, small intestine and testis, at a minimal levels in other tissues. Also found in vascular smooth muscle cells and hematopoietic malignancies.

It is found in the cytoplasm. Functionally, retards apoptosis induced by IL-3 deprivation. May function in the response of hemopoietic cells to external signals and in maintaining endothelial survival during infection. Can inhibit apoptosis induced by serum starvation in the mammary epithelial cell line HC11. This chain is Bcl-2-related protein A1 (BCL2A1), found in Homo sapiens (Human).